The sequence spans 45 residues: Large ribosomal subunit protein bL34 (45 aa).

Positions 22-45 (RMRTKSGQNVIKARRRKGRARLTV) are disordered. Positions 33 to 45 (KARRRKGRARLTV) are enriched in basic residues.

The protein belongs to the bacterial ribosomal protein bL34 family.

This chain is Large ribosomal subunit protein bL34, found in Thermosynechococcus vestitus (strain NIES-2133 / IAM M-273 / BP-1).